Reading from the N-terminus, the 240-residue chain is Eukaryotic translation initiation factor 3 subunit K (240 aa).

Residues 41–221 (YDKDIVLTIL…TIKTRNIDEK (181 aa)) form the PCI domain.

It belongs to the eIF-3 subunit K family. In terms of assembly, component of the eukaryotic translation initiation factor 3 (eIF-3) complex.

It localises to the cytoplasm. Component of the eukaryotic translation initiation factor 3 (eIF-3) complex, which is involved in protein synthesis of a specialized repertoire of mRNAs and, together with other initiation factors, stimulates binding of mRNA and methionyl-tRNAi to the 40S ribosome. The eIF-3 complex specifically targets and initiates translation of a subset of mRNAs involved in cell proliferation. This chain is Eukaryotic translation initiation factor 3 subunit K, found in Caenorhabditis briggsae.